The primary structure comprises 334 residues: Holliday junction branch migration complex subunit RuvB (334 aa).

The segment at 1 to 182 (MNERMVDQSM…FGVHLRLEYY (182 aa)) is large ATPase domain (RuvB-L). ATP is bound by residues Leu21, Arg22, Gly63, Lys66, Thr67, Thr68, 129-131 (EDF), Arg172, Tyr182, and Arg219. Mg(2+) is bound at residue Thr67. The small ATPAse domain (RuvB-S) stretch occupies residues 183–253 (NESDLKEIII…TTKHALGLLQ (71 aa)). Residues 256 to 334 (QHGLDYIDHK…HFAKSNEERG (79 aa)) are head domain (RuvB-H). DNA is bound by residues Arg292, Arg311, and Arg316.

This sequence belongs to the RuvB family. As to quaternary structure, homohexamer. Forms an RuvA(8)-RuvB(12)-Holliday junction (HJ) complex. HJ DNA is sandwiched between 2 RuvA tetramers; dsDNA enters through RuvA and exits via RuvB. An RuvB hexamer assembles on each DNA strand where it exits the tetramer. Each RuvB hexamer is contacted by two RuvA subunits (via domain III) on 2 adjacent RuvB subunits; this complex drives branch migration. In the full resolvosome a probable DNA-RuvA(4)-RuvB(12)-RuvC(2) complex forms which resolves the HJ.

Its subcellular location is the cytoplasm. The catalysed reaction is ATP + H2O = ADP + phosphate + H(+). The RuvA-RuvB-RuvC complex processes Holliday junction (HJ) DNA during genetic recombination and DNA repair, while the RuvA-RuvB complex plays an important role in the rescue of blocked DNA replication forks via replication fork reversal (RFR). RuvA specifically binds to HJ cruciform DNA, conferring on it an open structure. The RuvB hexamer acts as an ATP-dependent pump, pulling dsDNA into and through the RuvAB complex. RuvB forms 2 homohexamers on either side of HJ DNA bound by 1 or 2 RuvA tetramers; 4 subunits per hexamer contact DNA at a time. Coordinated motions by a converter formed by DNA-disengaged RuvB subunits stimulates ATP hydrolysis and nucleotide exchange. Immobilization of the converter enables RuvB to convert the ATP-contained energy into a lever motion, pulling 2 nucleotides of DNA out of the RuvA tetramer per ATP hydrolyzed, thus driving DNA branch migration. The RuvB motors rotate together with the DNA substrate, which together with the progressing nucleotide cycle form the mechanistic basis for DNA recombination by continuous HJ branch migration. Branch migration allows RuvC to scan DNA until it finds its consensus sequence, where it cleaves and resolves cruciform DNA. The sequence is that of Holliday junction branch migration complex subunit RuvB from Staphylococcus aureus (strain N315).